Consider the following 153-residue polypeptide: Small ribosomal subunit protein uS19A (153 aa).

Belongs to the universal ribosomal protein uS19 family. As to quaternary structure, component of the small ribosomal subunit (SSU). Mature yeast ribosomes consist of a small (40S) and a large (60S) subunit. The 40S small subunit contains 1 molecule of ribosomal RNA (18S rRNA) and at least 33 different proteins. The large 60S subunit contains 3 rRNA molecules (25S, 5.8S and 5S rRNA) and at least 46 different proteins.

It is found in the cytoplasm. It localises to the nucleus. Its subcellular location is the nucleolus. Functionally, component of the ribosome, a large ribonucleoprotein complex responsible for the synthesis of proteins in the cell. The small ribosomal subunit (SSU) binds messenger RNAs (mRNAs) and translates the encoded message by selecting cognate aminoacyl-transfer RNA (tRNA) molecules. The large subunit (LSU) contains the ribosomal catalytic site termed the peptidyl transferase center (PTC), which catalyzes the formation of peptide bonds, thereby polymerizing the amino acids delivered by tRNAs into a polypeptide chain. The nascent polypeptides leave the ribosome through a tunnel in the LSU and interact with protein factors that function in enzymatic processing, targeting, and the membrane insertion of nascent chains at the exit of the ribosomal tunnel. uS19 is involved in the nuclear export of the small ribosomal subunit precursor. Has a role in the late stage of the assembly of pre-40S particles within the nucleus and controls their export to the cytoplasm. The protein is Small ribosomal subunit protein uS19A (rps1501) of Schizosaccharomyces pombe (strain 972 / ATCC 24843) (Fission yeast).